The sequence spans 169 residues: MERAIFAGGCFWCMVQPFEEQAGILSVRSGYTGGHLPNPSYEQVCAKTTGHTEAVEIIFDPEEISYKELVELYWAQTDPTDAFGQFEDRGDNYRPVIYYTTERQKEIAEQSKANLQASGRFDQPIVTTIEPAEPFYLAEDYHQGFYKKNPKRYAQSSAIRHQFLEENWS.

Cys-10 is an active-site residue.

Belongs to the MsrA Met sulfoxide reductase family.

The enzyme catalyses L-methionyl-[protein] + [thioredoxin]-disulfide + H2O = L-methionyl-(S)-S-oxide-[protein] + [thioredoxin]-dithiol. It catalyses the reaction [thioredoxin]-disulfide + L-methionine + H2O = L-methionine (S)-S-oxide + [thioredoxin]-dithiol. In terms of biological role, has an important function as a repair enzyme for proteins that have been inactivated by oxidation. Catalyzes the reversible oxidation-reduction of methionine sulfoxide in proteins to methionine. The sequence is that of Peptide methionine sulfoxide reductase MsrA from Streptococcus pyogenes serotype M6 (strain ATCC BAA-946 / MGAS10394).